The sequence spans 607 residues: Large ribosomal subunit assembly factor BipA (607 aa).

The 196-residue stretch at 3–198 (EKLRNIAIIA…AIVDHVPAPD (196 aa)) folds into the tr-type G domain. GTP is bound by residues 15 to 20 (DHGKTT) and 128 to 131 (NKVD).

It belongs to the TRAFAC class translation factor GTPase superfamily. Classic translation factor GTPase family. BipA subfamily. Monomer.

Its subcellular location is the cytoplasm. The catalysed reaction is GTP + H2O = GDP + phosphate + H(+). In terms of biological role, a 50S ribosomal subunit assembly protein with GTPase activity, required for 50S subunit assembly at low temperatures, may also play a role in translation. Binds GTP and analogs. Binds the 70S ribosome between the 30S and 50S subunits, in a similar position as ribosome-bound EF-G; it contacts a number of ribosomal proteins, both rRNAs and the A-site tRNA. The protein is Large ribosomal subunit assembly factor BipA of Shigella flexneri.